The following is a 123-amino-acid chain: Large ribosomal subunit protein bL12 (123 aa).

This sequence belongs to the bacterial ribosomal protein bL12 family. In terms of assembly, homodimer. Part of the ribosomal stalk of the 50S ribosomal subunit. Forms a multimeric L10(L12)X complex, where L10 forms an elongated spine to which 2 to 4 L12 dimers bind in a sequential fashion. Binds GTP-bound translation factors.

Its function is as follows. Forms part of the ribosomal stalk which helps the ribosome interact with GTP-bound translation factors. Is thus essential for accurate translation. This Rickettsia bellii (strain OSU 85-389) protein is Large ribosomal subunit protein bL12.